Consider the following 562-residue polypeptide: Pyruvate kinase isozyme G, chloroplastic (562 aa).

Arg121 provides a ligand contact to substrate. Residues Asn123, Ser125, Asp156, and Thr157 each coordinate K(+). 123 to 126 (NMSH) is a binding site for ATP. Position 308 (Glu308) interacts with Mg(2+). Positions 331, 332, and 364 each coordinate substrate. Position 332 (Asp332) interacts with Mg(2+).

Belongs to the pyruvate kinase family. In terms of assembly, homotetramer. The cofactor is Mg(2+). It depends on K(+) as a cofactor. As to expression, highest levels in leaves. Also found in stems, roots and flowers.

It localises to the plastid. The protein resides in the chloroplast. The enzyme catalyses pyruvate + ATP = phosphoenolpyruvate + ADP + H(+). It functions in the pathway carbohydrate degradation; glycolysis; pyruvate from D-glyceraldehyde 3-phosphate: step 5/5. In Nicotiana tabacum (Common tobacco), this protein is Pyruvate kinase isozyme G, chloroplastic.